Reading from the N-terminus, the 87-residue chain is Small ribosomal subunit protein uS17 (87 aa).

This sequence belongs to the universal ribosomal protein uS17 family. As to quaternary structure, part of the 30S ribosomal subunit.

Functionally, one of the primary rRNA binding proteins, it binds specifically to the 5'-end of 16S ribosomal RNA. The chain is Small ribosomal subunit protein uS17 from Geobacillus stearothermophilus (Bacillus stearothermophilus).